A 2276-amino-acid chain; its full sequence is Poly [ADP-ribose] polymerase tankyrase (2276 aa).

2 stretches are compositionally biased toward basic residues: residues 1-15 (MARRVNKKKSPVKAA) and 87-98 (KAVKAPKVKAPS). 2 disordered regions span residues 1-20 (MARRVNKKKSPVKAARKIDG) and 79-103 (SSKTGQKVKAVKAPKVKAPSKKGND). ANK repeat units lie at residues 345 to 374 (KNITPLHTAAISNSTHMLEAMRAVYPTINI), 378 to 407 (DNWYTMHYAACAPGTAPMEFLLKNGGSVTM), 411 to 440 (QTETPLHVAARAGRAVNCTFLMKEMLDLEK), 461 to 490 (SGNSALHLAVLRNNLDVVDALLAEPTIVVD), 498 to 527 (NRLTPLMMACGKGYLEMAKKLVEKGALVEG), 531 to 560 (KKRTPLIHAMLNGQIHTAAFLLAKGASLTL), 564 to 593 (SGNTAAHYAAAYGFLDCLKLLASIDDNILS), 598 to 627 (WQLYPLSVAYLKGHYGIVTWLLEGPHKDKA), 675 to 725 (SGQT…KVDV), 729 to 758 (EDNTPLHYALTNGNLMLFNLMLDKVANKRN), 970 to 999 (KDDVLIVQAIMFDKPNVVELILDTASEMHL), 1171 to 1200 (NGNTILHLAAIKNSTICLMTLIRKKCHVDL), 1204 to 1233 (DGNTPLALAVHHGRQSSALTLIQANADVTE), 1472 to 1501 (GLIPPISFAVLQENPNMIRALRNAGASLKT), and 1505 to 1535 (YGRTPLMYAIMTNNRSVVDAIVGDGKLAVVL). Residues 1570–1649 (VPARVESDEE…STGPKRKKLV (80 aa)) are disordered. Composition is skewed to acidic residues over residues 1576 to 1590 (SDEEEEDNSGSESGE) and 1612 to 1622 (SDDEDDDDDDS). One copy of the ANK 16 repeat lies at 1662–1706 (KENNPLHYFIEPLAWENVELLGDLAAANKTAIVQCLIDKRSPNPI). The WGR domain maps to 1788-1889 (GLVSFCDETQ…ANFRDMPKKY (102 aa)). The region spanning 1910-2045 (KNTEKDPIRR…EIETATRLLC (136 aa)) is the PARP alpha-helical domain. The region spanning 2047–2276 (AEFRQDLDRV…VLPKYIVMYK (230 aa)) is the PARP catalytic domain.

As to expression, expressed throughout the head and tail, in germ cells and somatic cells.

Its subcellular location is the nucleus. The protein localises to the chromosome. The enzyme catalyses NAD(+) + (ADP-D-ribosyl)n-acceptor = nicotinamide + (ADP-D-ribosyl)n+1-acceptor + H(+).. It catalyses the reaction L-aspartyl-[protein] + NAD(+) = 4-O-(ADP-D-ribosyl)-L-aspartyl-[protein] + nicotinamide. It carries out the reaction L-glutamyl-[protein] + NAD(+) = 5-O-(ADP-D-ribosyl)-L-glutamyl-[protein] + nicotinamide. Its function is as follows. Poly[ADP-ribose] polymerases modify various nuclear proteins by poly(ADP-ribosyl)ation, a post-translational modification synthesized after DNA damage that appears as an obligatory step in a detection/signaling pathway leading to the reparation of DNA strand breaks and programmed cell death. In Caenorhabditis elegans, this protein is Poly [ADP-ribose] polymerase tankyrase.